The sequence spans 150 residues: Ribosomal RNA large subunit methyltransferase H (150 aa).

S-adenosyl-L-methionine is bound by residues A100 and 118-123 (LSEMTF).

It belongs to the RNA methyltransferase RlmH family. As to quaternary structure, homodimer.

Its subcellular location is the cytoplasm. It catalyses the reaction pseudouridine(1915) in 23S rRNA + S-adenosyl-L-methionine = N(3)-methylpseudouridine(1915) in 23S rRNA + S-adenosyl-L-homocysteine + H(+). Its function is as follows. Specifically methylates the pseudouridine at position 1915 (m3Psi1915) in 23S rRNA. This chain is Ribosomal RNA large subunit methyltransferase H, found in Helicobacter pylori (strain ATCC 700392 / 26695) (Campylobacter pylori).